A 258-amino-acid polypeptide reads, in one-letter code: UPF0246 protein CGSHiEE_07045 (258 aa).

Belongs to the UPF0246 family.

In Haemophilus influenzae (strain PittEE), this protein is UPF0246 protein CGSHiEE_07045.